The sequence spans 250 residues: Golgi SNAP receptor complex member 1 (250 aa).

Alanine 2 is modified (N-acetylalanine). Topologically, residues 2-229 (AAGTSNYWED…QRINLRKRRD (228 aa)) are cytoplasmic. Residues 9–30 (WEDLRKQARQLENELDLKLVSF) are a coiled coil. Residues 37-59 (YSHSSARDGGRDRYSSDTTPLLN) form a disordered region. Residues 41–51 (SARDGGRDRYS) are compositionally biased toward basic and acidic residues. Residues 68-95 (ETMAIEIEQLLARLTGVNDKMAEYTHSA) adopt a coiled-coil conformation. Serine 141 bears the Phosphoserine mark. Residues 230-250 (SLILGGVIGICTILLLLYAFH) form a helical; Anchor for type IV membrane protein membrane-spanning segment.

Belongs to the GOSR1 family. As to quaternary structure, component of several multiprotein Golgi SNARE complexes. Identified in a SNARE complex with BET1, STX5 and YKT6, in a SNARE complex with BET1L, STX5 and YKT6, in a SNARE complex with STX5, GOSR2, SEC22B and BET1, and in complex with STX5 and COG3. Interacts with GABARAPL2. Interacts with the 34 kDa STX5 isoform.

The protein localises to the golgi apparatus membrane. In terms of biological role, involved in transport from the ER to the Golgi apparatus as well as in intra-Golgi transport. It belongs to a super-family of proteins called t-SNAREs or soluble NSF (N-ethylmaleimide-sensitive factor) attachment protein receptor. May play a protective role against hydrogen peroxide induced cytotoxicity under glutathione depleted conditions in neuronal cells by regulating the intracellular ROS levels via inhibition of p38 MAPK (MAPK11, MAPK12, MAPK13 and MAPK14). Participates in docking and fusion stage of ER to cis-Golgi transport. Plays an important physiological role in VLDL-transport vesicle-Golgi fusion and thus in VLDL delivery to the hepatic cis-Golgi. This is Golgi SNAP receptor complex member 1 (Gosr1) from Rattus norvegicus (Rat).